Consider the following 340-residue polypeptide: Protein B17 (340 aa).

It belongs to the orthopoxvirus B17 protein family.

This is Protein B17 from Vaccinia virus (strain Western Reserve) (VACV).